We begin with the raw amino-acid sequence, 83 residues long: Phytosulfokines 4 (83 aa).

Residues 1 to 28 (MAARTVAVAAALAVLLIFAASSATVAMA) form the signal peptide. Positions 29–74 (GRPTPTTSLDEEAAQAAAQSEIGGGCKEGEGEEECLARRTLTAHTD) are excised as a propeptide. 2 positions are modified to sulfotyrosine: tyrosine 75 and tyrosine 77. Positions 80–83 (QHHN) are excised as a propeptide.

It belongs to the phytosulfokine family. Sulfation is important for activity and for the binding to a putative membrane receptor. In terms of processing, PSK-alpha is produced by endopeptidase digestion. PSK-beta is produced from PSK-alpha by exopeptidase digestion.

It localises to the secreted. Promotes plant cell differentiation, organogenesis and somatic embryogenesis as well as cell proliferation. The protein is Phytosulfokines 4 (PSK4) of Oryza sativa subsp. japonica (Rice).